The following is a 335-amino-acid chain: Methionyl-tRNA formyltransferase (335 aa).

(6S)-5,6,7,8-tetrahydrofolate is bound at residue serine 122–proline 125. The disordered stretch occupies residues aspartate 203–arginine 222.

Belongs to the Fmt family.

The catalysed reaction is L-methionyl-tRNA(fMet) + (6R)-10-formyltetrahydrofolate = N-formyl-L-methionyl-tRNA(fMet) + (6S)-5,6,7,8-tetrahydrofolate + H(+). Attaches a formyl group to the free amino group of methionyl-tRNA(fMet). The formyl group appears to play a dual role in the initiator identity of N-formylmethionyl-tRNA by promoting its recognition by IF2 and preventing the misappropriation of this tRNA by the elongation apparatus. The sequence is that of Methionyl-tRNA formyltransferase from Rhodopirellula baltica (strain DSM 10527 / NCIMB 13988 / SH1).